We begin with the raw amino-acid sequence, 1923 residues long: GREB1-like protein (1923 aa).

A compositionally biased stretch (acidic residues) spans 87–96 (EDDEDDEEMS). Disordered regions lie at residues 87–111 (EDDEDDEEMSDSNSPPIPYSQKPAP), 246–326 (SCHS…GPPK), and 1101–1222 (RAAV…RGCR). Low complexity predominate over residues 252–262 (PSSSVSSTVTP). 3 stretches are compositionally biased toward polar residues: residues 263–278 (ENGTTNGYKSGFTQTD), 296–307 (TPAHTGNYSLSP), and 1119–1161 (PQSN…SPAT). The segment covering 1195–1206 (SSTTSKPSSSSS) has biased composition (low complexity). The chain crosses the membrane as a helical span at residues 1843-1862 (GVFFSGLLLYLCDSFVGADL).

This sequence belongs to the GREB1 family. In terms of tissue distribution, widely expressed, with prominent expression in the cochlea. Expressed at high levels in fetal kidney. In adult tissues, highest levels in vagina, cervix and epididymis.

The protein localises to the membrane. Its function is as follows. Plays a major role in early metanephros and genital development. The sequence is that of GREB1-like protein (GREB1L) from Homo sapiens (Human).